Here is a 541-residue protein sequence, read N- to C-terminus: Neutral amino acid transporter B(0) (541 aa).

The residue at position 1 (M1) is an N-acetylmethionine. The Cytoplasmic segment spans residues 1-51 (MVADPPRDSKGLAAAEPTANGGLALASIEDQGAAAGGYCGSRDQVRRCLRA). The chain crosses the membrane as a helical span at residues 52 to 81 (NLLVLLTVVAVVAGVALGLGVSGAGGALAL). The Extracellular portion of the chain corresponds to 82–94 (GPERLSAFVFPGE). The chain crosses the membrane as a helical span at residues 95 to 116 (LLLRLLRMIILPLVVCSLIGGA). The Cytoplasmic segment spans residues 117–130 (ASLDPGALGRLGAW). Residues 131 to 153 (ALLFFLVTTLLASALGVGLALAL) form a helical membrane-spanning segment. At 154-224 (QPGAASAAIN…GTRVKVPVGQ (71 aa)) the chain is on the extracellular side. N163 and N212 each carry an N-linked (GlcNAc...) asparagine glycan. Residues 225-248 (EVEGMNILGLVVFAIVFGVALRKL) form a helical membrane-spanning segment. Over 249 to 257 (GPEGELLIR) the chain is Cytoplasmic. Residues 258 to 285 (FFNSFNEATMVLVSWIMWYAPVGIMFLV) traverse the membrane as a helical segment. Residues 286–306 (AGKIVEMEDVGLLFARLGKYI) lie on the Extracellular side of the membrane. Residues 307 to 328 (LCCLLGHAIHGLLVLPLIYFLF) traverse the membrane as a helical segment. Residues 329-333 (TRKNP) are Cytoplasmic-facing. An intramembrane region (discontinuously helical) is located at residues 334 to 364 (YRFLWGIVTPLATAFGTSSSSATLPLMMKCV). Residues 365–373 (EENNGVAKH) lie on the Cytoplasmic side of the membrane. The chain crosses the membrane as a helical span at residues 374–400 (ISRFILPIGATVNMDGAALFQCVAAVF). Na(+)-binding residues include G382, T384, and N386. The Extracellular portion of the chain corresponds to 401–413 (IAQLSQQSLDFVK). Positions 414-447 (IITILVTATASSVGAAGIPAGGVLTLAIILEAVN) form an intramembrane region, discontinuously helical. Over 448-460 (LPVDHISLILAVD) the chain is Extracellular. A helical membrane pass occupies residues 461 to 482 (WLVDRSCTVLNVEGDALGAGLL). Na(+) contacts are provided by N471 and D475. The Cytoplasmic portion of the chain corresponds to 483–541 (QNYVDRTESRSTEPELIQVKSELPLDPLPVPTEEGNPLLKHYRGPAGDATVASEKESVM). S493 bears the Phosphoserine mark. T494 carries the phosphothreonine modification. Phosphoserine is present on residues S503, S535, and S539. Positions 511–541 (PVPTEEGNPLLKHYRGPAGDATVASEKESVM) are disordered.

This sequence belongs to the dicarboxylate/amino acid:cation symporter (DAACS) (TC 2.A.23) family. SLC1A5 subfamily. Homotrimer. Interacts with ERVH48-1/suppressyn; may negatively regulate syncytialization. Placenta, lung, skeletal muscle, kidney, pancreas, and intestine. Expressed in CD34-positive hematopoietic progenitors (at protein level).

It is found in the cell membrane. The protein localises to the melanosome. The enzyme catalyses L-glutamine(out) + L-serine(in) + Na(+)(out) = L-glutamine(in) + L-serine(out) + Na(+)(in). It carries out the reaction L-glutamine(in) + L-serine(out) + Na(+)(out) = L-glutamine(out) + L-serine(in) + Na(+)(in). The catalysed reaction is L-threonine(in) + L-glutamine(out) + Na(+)(out) = L-threonine(out) + L-glutamine(in) + Na(+)(in). It catalyses the reaction L-threonine(out) + L-glutamine(in) + Na(+)(out) = L-threonine(in) + L-glutamine(out) + Na(+)(in). The enzyme catalyses L-asparagine(in) + L-glutamine(out) + Na(+)(out) = L-asparagine(out) + L-glutamine(in) + Na(+)(in). It carries out the reaction L-asparagine(out) + L-glutamine(in) + Na(+)(out) = L-asparagine(in) + L-glutamine(out) + Na(+)(in). The catalysed reaction is L-glutamine(in) + L-alanine(out) + Na(+)(out) = L-glutamine(out) + L-alanine(in) + Na(+)(in). It catalyses the reaction L-valine(out) + L-glutamine(in) + Na(+)(out) = L-valine(in) + L-glutamine(out) + Na(+)(in). The enzyme catalyses L-glutamine(in) + L-methionine(out) + Na(+)(out) = L-glutamine(out) + L-methionine(in) + Na(+)(in). It carries out the reaction L-glutamine(in) + L-glutamate(out) + Na(+)(out) + H(+)(out) = L-glutamine(out) + L-glutamate(in) + Na(+)(in) + H(+)(in). The catalysed reaction is D-serine(in) + L-glutamine(out) + Na(+)(out) = D-serine(out) + L-glutamine(in) + Na(+)(in). It catalyses the reaction D-serine(in) + L-alanine(out) + Na(+)(out) = D-serine(out) + L-alanine(in) + Na(+)(in). The enzyme catalyses nitrate(in) = nitrate(out). It carries out the reaction iodide(out) = iodide(in). The catalysed reaction is thiocyanate(in) = thiocyanate(out). Its activity is regulated as follows. Regulated by L-cysteine, which can either inhibit substrate influx or trigger substrate efflux without being transported itself. Its function is as follows. Sodium-coupled antiporter of neutral amino acids. In a tri-substrate transport cycle, exchanges neutral amino acids between the extracellular and intracellular compartments, coupled to the inward cotransport of at least one sodium ion. The preferred substrate is the essential amino acid L-glutamine, a precursor for biosynthesis of proteins, nucleotides and amine sugars as well as an alternative fuel for mitochondrial oxidative phosphorylation. Exchanges L-glutamine with other neutral amino acids such as L-serine, L-threonine and L-asparagine in a bidirectional way. Provides L-glutamine to proliferating stem and activated cells driving the metabolic switch toward cell differentiation. The transport cycle is usually pH-independent, with the exception of L-glutamate. Transports extracellular L-glutamate coupled to the cotransport of one proton and one sodium ion in exchange for intracellular L-glutamine counter-ion. May provide for L-glutamate uptake in glial cells regulating glutamine/glutamate cycle in the nervous system. Can transport D-amino acids. Mediates D-serine release from the retinal glia potentially affecting NMDA receptor function in retinal neurons. Displays sodium- and amino acid-dependent but uncoupled channel-like anion conductance with a preference SCN(-) &gt;&gt; NO3(-) &gt; I(-) &gt; Cl(-). Through binding of the fusogenic protein syncytin-1/ERVW-1 may mediate trophoblasts syncytialization, the spontaneous fusion of their plasma membranes, an essential process in placental development. In terms of biological role, (Microbial infection) Acts as a cell surface receptor for Feline endogenous virus RD114. (Microbial infection) Acts as a cell surface receptor for Baboon M7 endogenous virus. Functionally, (Microbial infection) Acts as a cell surface receptor for type D simian retroviruses. The chain is Neutral amino acid transporter B(0) from Homo sapiens (Human).